The chain runs to 298 residues: Glutamyl-Q tRNA(Asp) synthetase (298 aa).

Residues 9–13 (RFAPS) and E45 contribute to the L-glutamate site. Positions 12–22 (PSPTGLLHAGS) match the 'HIGH' region motif. 4 residues coordinate Zn(2+): C101, C103, Y121, and C125. Positions 179 and 197 each coordinate L-glutamate. A 'KMSKS' region motif is present at residues 235-239 (KLSKQ). K238 is an ATP binding site.

This sequence belongs to the class-I aminoacyl-tRNA synthetase family. GluQ subfamily. Zn(2+) serves as cofactor.

Catalyzes the tRNA-independent activation of glutamate in presence of ATP and the subsequent transfer of glutamate onto a tRNA(Asp). Glutamate is transferred on the 2-amino-5-(4,5-dihydroxy-2-cyclopenten-1-yl) moiety of the queuosine in the wobble position of the QUC anticodon. This chain is Glutamyl-Q tRNA(Asp) synthetase, found in Chromobacterium violaceum (strain ATCC 12472 / DSM 30191 / JCM 1249 / CCUG 213 / NBRC 12614 / NCIMB 9131 / NCTC 9757 / MK).